The primary structure comprises 313 residues: Dehydrogenase/reductase SDR family member 1 (313 aa).

Position 2 is an N-acetylalanine (Ala2). Position 19 (Ile19) interacts with NAD(+). Omega-N-methylarginine is present on Arg21. Residue Asp64 coordinates NAD(+). A substrate-binding site is contributed by Ser151. Positions 163, 167, and 198 each coordinate NAD(+). The Proton acceptor role is filled by Tyr163. The required for ER localization stretch occupies residues 235–313 (CVVALATDPN…WIIALYTSKF (79 aa)).

Belongs to the short-chain dehydrogenases/reductases (SDR) family. In terms of tissue distribution, detected in heart, liver, adrenal glands, and at low levels in skeletal muscle, kidney, pancreas and brain.

Its subcellular location is the endoplasmic reticulum. It carries out the reaction 17alpha-estradiol + NADP(+) = estrone + NADPH + H(+). The enzyme catalyses testosterone + NADP(+) = androst-4-ene-3,17-dione + NADPH + H(+). It catalyses the reaction prostaglandin E1 + NADPH + H(+) = prostaglandin F1 + NADP(+). The catalysed reaction is isatin + NADPH + H(+) = 3-hydroxyindolin-2-one + NADP(+). In terms of biological role, NADPH-dependent oxidoreductase which catalyzes the reduction of steroids (estrone, androstene-3,17-dione and cortisone) as well as prostaglandin E1, isatin and xenobiotics in vitro. May have a role in steroid and/or xenobiotic metabolism. This Homo sapiens (Human) protein is Dehydrogenase/reductase SDR family member 1.